The primary structure comprises 274 residues: Penicillin-insensitive murein endopeptidase (274 aa).

The signal sequence occupies residues 1 to 19; it reads MNKTAIALLALLASSVSLA. 3 disulfide bridges follow: C44/C265, C187/C235, and C216/C223. 6 residues coordinate Zn(2+): H110, H113, D120, D147, H150, and H211. Residues 227–274 form a disordered region; that stretch reads PLPPPGDGCGAELQSWFEPPKPGTTKPEKKTPPPLPPSCQALLDEHVI.

Belongs to the peptidase M74 family. In terms of assembly, dimer. Zn(2+) serves as cofactor.

The protein localises to the periplasm. Its function is as follows. Murein endopeptidase that cleaves the D-alanyl-meso-2,6-diamino-pimelyl amide bond that connects peptidoglycan strands. Likely plays a role in the removal of murein from the sacculus. The polypeptide is Penicillin-insensitive murein endopeptidase (Escherichia coli O157:H7).